Reading from the N-terminus, the 262-residue chain is UDP-2,3-diacylglucosamine hydrolase (262 aa).

Positions 10, 12, 47, 86, 121, 218, and 220 each coordinate Mn(2+).

This sequence belongs to the LpxH family. Requires Mn(2+) as cofactor.

The protein localises to the cell inner membrane. Its subcellular location is the cytoplasm. The catalysed reaction is UDP-2-N,3-O-bis[(3R)-3-hydroxytetradecanoyl]-alpha-D-glucosamine + H2O = 2-N,3-O-bis[(3R)-3-hydroxytetradecanoyl]-alpha-D-glucosaminyl 1-phosphate + UMP + 2 H(+). The protein operates within glycolipid biosynthesis; lipid IV(A) biosynthesis; lipid IV(A) from (3R)-3-hydroxytetradecanoyl-[acyl-carrier-protein] and UDP-N-acetyl-alpha-D-glucosamine: step 4/6. Hydrolyzes the pyrophosphate bond of UDP-2,3-diacylglucosamine to yield 2,3-diacylglucosamine 1-phosphate (lipid X) and UMP by catalyzing the attack of water at the alpha-P atom. Involved in the biosynthesis of lipid A, a phosphorylated glycolipid that anchors the lipopolysaccharide to the outer membrane of the cell. In Porphyromonas gingivalis (strain ATCC BAA-308 / W83), this protein is UDP-2,3-diacylglucosamine hydrolase.